A 217-amino-acid polypeptide reads, in one-letter code: Proteasome subunit beta (217 aa).

Residues 1 to 14 (MIANNDQYKEYMKG) constitute a propeptide, removed in mature form; by autocatalysis. Catalysis depends on Thr15, which acts as the Nucleophile.

Belongs to the peptidase T1B family. The 20S proteasome core is composed of 14 alpha and 14 beta subunits that assemble into four stacked heptameric rings, resulting in a barrel-shaped structure. The two inner rings, each composed of seven catalytic beta subunits, are sandwiched by two outer rings, each composed of seven alpha subunits. The catalytic chamber with the active sites is on the inside of the barrel. Has a gated structure, the ends of the cylinder being occluded by the N-termini of the alpha-subunits. Is capped at one or both ends by the proteasome regulatory ATPase, PAN.

It localises to the cytoplasm. The enzyme catalyses Cleavage of peptide bonds with very broad specificity.. With respect to regulation, the formation of the proteasomal ATPase PAN-20S proteasome complex, via the docking of the C-termini of PAN into the intersubunit pockets in the alpha-rings, triggers opening of the gate for substrate entry. Interconversion between the open-gate and close-gate conformations leads to a dynamic regulation of the 20S proteasome proteolysis activity. In terms of biological role, component of the proteasome core, a large protease complex with broad specificity involved in protein degradation. In Methanococcus aeolicus (strain ATCC BAA-1280 / DSM 17508 / OCM 812 / Nankai-3), this protein is Proteasome subunit beta.